The following is a 156-amino-acid chain: Rhombotin-1 (156 aa).

2 LIM zinc-binding domains span residues 22–84 (KGCA…LFGT) and 86–148 (GNCA…GQLN).

As to expression, expressed in the brain and not in the thymus.

The protein resides in the nucleus. Functionally, may be involved in gene regulation within neural lineage cells potentially by direct DNA binding or by binding to other transcription factors. This is Rhombotin-1 (LMO1) from Bos taurus (Bovine).